Consider the following 861-residue polypeptide: ToMV resistant protein Tm-2 netted virescent (861 aa).

A coiled-coil region spans residues 63–83; the sequence is VKNLLKDIQELAGDVEDLLDD. One can recognise an NB-ARC domain in the interval 162–388; that stretch reads DDFNMLQAKL…LESMGHKVQD (227 aa). 185–192 provides a ligand contact to ATP; that stretch reads GMPGLGKT. LRR repeat units lie at residues 225 to 248, 305 to 327, 388 to 411, 449 to 472, 510 to 536, 585 to 608, 609 to 631, 652 to 680, 689 to 710, 712 to 735, 736 to 758, 784 to 807, and 810 to 835; these read LDIA…NLRS, LHAL…IFNF, DGCA…CFLY, LAED…TYNG, VARL…KLEK, MTCL…IVKL, TRLE…VWES, ISSF…FFEP, LRKL…IFSP, LKAL…LSSY, PHIA…SFPP, LRKL…EANG, and FPQL…DVSM.

This sequence belongs to the disease resistance NB-LRR family. (Microbial infection) Interacts with tobamoviruses mouvement protein at the plasma membrane; this interaction triggers defense responses leading to programmed cell death. In terms of assembly, binds to HSP90 proteins; this interaction seems required for defense responses toward tobamoviruses.

Its subcellular location is the cell membrane. Its function is as follows. Inhibitor of viral mouvements which confers resistance to some tobamoviruses including tomato mosaic virus (ToMV) (e.g. isolate L and W3) and tobacco mosaic virus (TMV), but not to resistance-breaking isolates (e.g. Ltbl) ToMV and tomato brown rugose fruit virus (ToBRFV). Elicits a hypersensitive reaction in response to avirulent (Avr) movement proteins from resistance inducing tobamoviruses (e.g. ToMV and TMV) strains, thus leading to programmed cell death. The chain is ToMV resistant protein Tm-2 netted virescent from Solanum lycopersicum (Tomato).